Here is a 126-residue protein sequence, read N- to C-terminus: uncharacterized protein (126 aa).

This is an uncharacterized protein from Bacillus subtilis (strain 168).